A 157-amino-acid chain; its full sequence is 6,7-dimethyl-8-ribityllumazine synthase (157 aa).

5-amino-6-(D-ribitylamino)uracil-binding positions include F24, 56 to 58, and 79 to 81; these read SFE and VLI. Residue 84 to 85 coordinates (2S)-2-hydroxy-3-oxobutyl phosphate; it reads ET. H87 acts as the Proton donor in catalysis. Residue F112 coordinates 5-amino-6-(D-ribitylamino)uracil. R126 is a (2S)-2-hydroxy-3-oxobutyl phosphate binding site.

It belongs to the DMRL synthase family.

The enzyme catalyses (2S)-2-hydroxy-3-oxobutyl phosphate + 5-amino-6-(D-ribitylamino)uracil = 6,7-dimethyl-8-(1-D-ribityl)lumazine + phosphate + 2 H2O + H(+). The protein operates within cofactor biosynthesis; riboflavin biosynthesis; riboflavin from 2-hydroxy-3-oxobutyl phosphate and 5-amino-6-(D-ribitylamino)uracil: step 1/2. In terms of biological role, catalyzes the formation of 6,7-dimethyl-8-ribityllumazine by condensation of 5-amino-6-(D-ribitylamino)uracil with 3,4-dihydroxy-2-butanone 4-phosphate. This is the penultimate step in the biosynthesis of riboflavin. In Pyrococcus furiosus (strain ATCC 43587 / DSM 3638 / JCM 8422 / Vc1), this protein is 6,7-dimethyl-8-ribityllumazine synthase.